The sequence spans 211 residues: TVQGFDISSYQPSVNFAGAYSAGARFVIIKATEGTSYTNPSFSSQYNGATTATGNYFIRGGYHFAHPGETTGAAQADYFIAHGGGWSGDGITLPGMLDLESEGSNPACWGLSAASMVAWIKAFSDRYHAVTGRYPMLYTNPSWWSSCTGNSNAFVNTNPLVLANRYASAPGTIPGGWPYQTIWQNSDAYAYGGSNNFINGSIDNLKKLATG.

Catalysis depends on residues D6 and E100. An intrachain disulfide couples C108 to C147.

Belongs to the glycosyl hydrolase 25 family.

The protein resides in the secreted. It is found in the extracellular space. The enzyme catalyses Hydrolysis of (1-&gt;4)-beta-linkages between N-acetylmuramic acid and N-acetyl-D-glucosamine residues in a peptidoglycan and between N-acetyl-D-glucosamine residues in chitodextrins.. This enzyme has both lysozyme (acetylmuramidase) and diacetylmuramidase activities. The sequence is that of N,O-diacetylmuramidase from Chalaropsis sp.